The chain runs to 265 residues: MKPAMETAAEENTEQSQERKGCFECCIKCLGGVPYASLVATILCFSGVALFCGCGHVALAGTVAILEQHFSTNASDHALLSEVIQLMQYVIYGIASFFFLYGIILLAEGFYTTSAVKELHGEFKTTACGRCISGMFVFLTYVLGVAWLGVFGFSAVPVFMFYNIWSTCEVIKSPQTNGTTGVEQICVDIRQYGIIPWNAFPGKICGSALENICNTNEFYMSYHLFIVACAGAGATVIALLIYMMATTYNYAVLKFKSREDCCTKF.

A helical membrane pass occupies residues 31–51; that stretch reads GGVPYASLVATILCFSGVALF. N-linked (GlcNAc...) asparagine glycosylation is present at Asn-73. Helical transmembrane passes span 90 to 110 and 136 to 156; these read VIYG…AEGF and FVFL…FSAV. Asn-177 is a glycosylation site (N-linked (GlcNAc...) asparagine). Residues 224 to 244 traverse the membrane as a helical segment; sequence LFIVACAGAGATVIALLIYMM. Ser-257 is modified (phosphoserine).

It belongs to the myelin proteolipid protein family. Interacts with SERT. In terms of tissue distribution, neurons and glia; cerebellar Bergmann glia, in glia within white matter tracts of the cerebellum and cerebrum, and in embryonic dorsal root ganglia.

The protein localises to the cell membrane. May be involved in neural development. Involved in regulation of osteoblast function and bone formation. Involved in matrix vesicle release by osteoblasts; this function seems to involve maintenance of the actin cytoskeleton. May be involved in cellular trafficking of SERT and thereby in regulation of serotonin uptake. This chain is Neuronal membrane glycoprotein M6-b (GPM6B), found in Homo sapiens (Human).